The primary structure comprises 592 residues: Probable translation initiation factor IF-2 (592 aa).

A tr-type G domain is found at 5 to 226 (IRSPFVVVMG…AGVSQRFIPR (222 aa)). The segment at 14-21 (GHVDVGKT) is G1. 14–21 (GHVDVGKT) is a binding site for GTP. Positions 39-43 (MITQH) are G2. The G3 stretch occupies residues 80–83 (DTPG). GTP contacts are provided by residues 80–84 (DTPGH) and 134–137 (NKLD). Residues 134–137 (NKLD) form a G4 region. The tract at residues 202 to 204 (SAV) is G5.

This sequence belongs to the TRAFAC class translation factor GTPase superfamily. Classic translation factor GTPase family. IF-2 subfamily.

Function in general translation initiation by promoting the binding of the formylmethionine-tRNA to ribosomes. Seems to function along with eIF-2. The protein is Probable translation initiation factor IF-2 of Pyrobaculum calidifontis (strain DSM 21063 / JCM 11548 / VA1).